Reading from the N-terminus, the 817-residue chain is Phospholipase D alpha 2 (817 aa).

The C2 domain occupies 1 to 130 (MAHLLLHGTL…LSGEAIERRL (130 aa)). Ca(2+) is bound at residue Asp-192. The PLD phosphodiesterase 1 domain maps to 333-372 (YMITHHQKTVIVDHDMPVPRGGGSRRIVSFVGGLDLCDGR). Catalysis depends on residues His-338, Lys-340, and Asp-345. His-338 provides a ligand contact to a 1,2-diacyl-sn-glycero-3-phosphate. Residues His-378 and His-412 each contribute to the Ca(2+) site. A 1,2-diacyl-sn-glycero-3-phosphate is bound by residues Gln-529 and His-668. Residues 663 to 690 (FMIYVHSKMMIVDDEYIIVGSANINQRS) enclose the PLD phosphodiesterase 2 domain. Residues His-668, Lys-670, and Asp-675 contribute to the active site. A Ca(2+)-binding site is contributed by Glu-730.

The protein belongs to the phospholipase D family. C2-PLD subfamily. It depends on Ca(2+) as a cofactor.

The catalysed reaction is a 1,2-diacyl-sn-glycero-3-phosphocholine + H2O = a 1,2-diacyl-sn-glycero-3-phosphate + choline + H(+). Hydrolyzes glycerol-phospholipids at the terminal phosphodiesteric bond. Plays an important role in various cellular processes. This is Phospholipase D alpha 2 (PLD2) from Oryza sativa subsp. japonica (Rice).